The following is a 529-amino-acid chain: Listeriolysin O (529 aa).

An N-terminal signal peptide occupies residues 1-24 (MKKIMLVFITLILVSLPIAQQTEA). 4 beta stranded membrane-spanning segments follow: residues 214-227 (ESQL…AFKA), 234-243 (VNFGAISEGK), 312-321 (STKVKAAFDA), and 329-341 (SGDV…IKNS). The short motif at 483–493 (ECTGLAWEWWR) is the Conserved undecapeptide element. The Cholesterol binding signature appears at 515-516 (TL).

Belongs to the cholesterol-dependent cytolysin family. Homooligomeric pore complex of 35 to 50 subunits; when inserted in the host membrane.

The protein resides in the secreted. It is found in the host membrane. Its subcellular location is the host cell membrane. With respect to regulation, activity of listeriolysin O is regulated on multiple levels. It should be high in the phagosome, thereby allowing escape of the bacteria from the phagosomal compartment. Then, once inside the host cytosol, the activity must be controlled to prevent lysis of the host plasma membrane and loss of the intracellular environment. Its function is as follows. A cholesterol-dependent toxin that causes cytolysis by forming pores in cholesterol containing host membranes. After binding to target membranes, the protein undergoes a major conformation change, leading to its insertion in the host membrane and formation of an oligomeric pore complex. Cholesterol is required for binding to host membranes, membrane insertion and pore formation; cholesterol binding is mediated by a Thr-Leu pair in the C-terminus. Acts as a major virulence factor required for the escape of bacteria from phagosomal vacuoles and entry into the host cytosol. Can be reversibly inactivated by oxidation. In Listeria monocytogenes serotype 4b (strain F2365), this protein is Listeriolysin O (hly).